The following is a 460-amino-acid chain: Bifunctional protein GlmU (460 aa).

The tract at residues 1–229 (MTNYAIILAA…FNESLGVNDR (229 aa)) is pyrophosphorylase. Residues 8 to 11 (LAAG), Lys22, Gln72, and 77 to 78 (GT) contribute to the UDP-N-acetyl-alpha-D-glucosamine site. Position 102 (Asp102) interacts with Mg(2+). UDP-N-acetyl-alpha-D-glucosamine-binding residues include Gly139, Glu154, Asn169, and Asn227. Asn227 is a Mg(2+) binding site. The linker stretch occupies residues 230 to 250 (VALAIAETVMRQRITQKHMVN). Residues 251 to 460 (GVTFQNPETV…RLAHHPSRSK (210 aa)) are N-acetyltransferase. 2 residues coordinate UDP-N-acetyl-alpha-D-glucosamine: Arg332 and Lys350. The Proton acceptor role is filled by His362. Tyr365 and Asn376 together coordinate UDP-N-acetyl-alpha-D-glucosamine. Residues Ala379, 385-386 (NY), Ser404, Ala422, and Arg439 each bind acetyl-CoA.

This sequence in the N-terminal section; belongs to the N-acetylglucosamine-1-phosphate uridyltransferase family. In the C-terminal section; belongs to the transferase hexapeptide repeat family. In terms of assembly, homotrimer. Mg(2+) serves as cofactor.

The protein localises to the cytoplasm. It carries out the reaction alpha-D-glucosamine 1-phosphate + acetyl-CoA = N-acetyl-alpha-D-glucosamine 1-phosphate + CoA + H(+). It catalyses the reaction N-acetyl-alpha-D-glucosamine 1-phosphate + UTP + H(+) = UDP-N-acetyl-alpha-D-glucosamine + diphosphate. The protein operates within nucleotide-sugar biosynthesis; UDP-N-acetyl-alpha-D-glucosamine biosynthesis; N-acetyl-alpha-D-glucosamine 1-phosphate from alpha-D-glucosamine 6-phosphate (route II): step 2/2. Its pathway is nucleotide-sugar biosynthesis; UDP-N-acetyl-alpha-D-glucosamine biosynthesis; UDP-N-acetyl-alpha-D-glucosamine from N-acetyl-alpha-D-glucosamine 1-phosphate: step 1/1. It functions in the pathway bacterial outer membrane biogenesis; LPS lipid A biosynthesis. Catalyzes the last two sequential reactions in the de novo biosynthetic pathway for UDP-N-acetylglucosamine (UDP-GlcNAc). The C-terminal domain catalyzes the transfer of acetyl group from acetyl coenzyme A to glucosamine-1-phosphate (GlcN-1-P) to produce N-acetylglucosamine-1-phosphate (GlcNAc-1-P), which is converted into UDP-GlcNAc by the transfer of uridine 5-monophosphate (from uridine 5-triphosphate), a reaction catalyzed by the N-terminal domain. This chain is Bifunctional protein GlmU, found in Streptococcus pyogenes serotype M1.